We begin with the raw amino-acid sequence, 326 residues long: Homeobox protein Hox-A1 (326 aa).

The Antp-type hexapeptide motif lies at 196–201 (TFDWMK). Positions 221-280 (PNTVRTNFTTKQLTELEKEFHFNKYLTRARRVEIAAALQLNETQVKIWFQNRRMKQKKRE) form a DNA-binding region, homeobox. The tract at residues 273-326 (RMKQKKREKEGLTSASPATPGSEANTEDTSDKCNSTSSTPSPSSSTSETINTSG) is disordered. The span at 285–296 (TSASPATPGSEA) shows a compositional bias: polar residues. A compositionally biased stretch (low complexity) spans 306–326 (NSTSSTPSPSSSTSETINTSG).

This sequence belongs to the Antp homeobox family. Labial subfamily.

Its subcellular location is the nucleus. In terms of biological role, sequence-specific transcription factor. Part of a developmental regulatory system that provides cells with specific positional identities on the anterior-posterior axis. Acts on the anterior body structures. Seems to act in the maintenance and/or generation of hindbrain segments. This Heterodontus francisci (Horn shark) protein is Homeobox protein Hox-A1 (HOXA1).